The sequence spans 261 residues: Lys-63-specific deubiquitinase BRCC36 (261 aa).

One can recognise an MPN domain in the interval 6–149 (VHIQGDAFLV…YTCFQSVQAQ (144 aa)). Residues histidine 92, histidine 94, and aspartate 105 each contribute to the Zn(2+) site. The short motif at 92-105 (HSHPHITVWPSHVD) is the JAMM motif element.

This sequence belongs to the peptidase M67A family. BRCC36 subfamily. As to quaternary structure, component of the BRCA1-A complex, at least composed of brca1, bard1, uimc1/rap80, abraxas1, brcc3/brcc36, babam2 and babam1/nba1. In the BRCA1-A complex, interacts directly with ABRAXAS1 and babam2. Component of the BRISC complex, at least composed of ABRAXAS2, brcc3/brcc36, babam2 and babam1/nba1. Within the complex, interacts directly with abraxas2. Both the BRCA1-A complex and the BRISC complex bind polyubiquitin. Requires Zn(2+) as cofactor.

The protein resides in the nucleus. The protein localises to the cytoplasm. Its subcellular location is the cytoskeleton. It localises to the spindle pole. In terms of biological role, metalloprotease that specifically cleaves 'Lys-63'-linked polyubiquitin chains. Does not have activity toward 'Lys-48'-linked polyubiquitin chains. Component of the BRCA1-A complex, a complex that specifically recognizes 'Lys-63'-linked ubiquitinated histones H2A and H2AX at DNA lesions sites, leading to target the brca1-bard1 heterodimer to sites of DNA damage at double-strand breaks (DSBs). In the BRCA1-A complex, it specifically removes 'Lys-63'-linked ubiquitin on histones H2A and H2AX, antagonizing the rnf8-dependent ubiquitination at double-strand breaks (DSBs). Catalytic subunit of the BRISC complex, a multiprotein complex that specifically cleaves 'Lys-63'-linked ubiquitin in various substrates. Mediates the specific 'Lys-63'-specific deubiquitination associated with the COP9 signalosome complex (CSN), via the interaction of the BRISC complex with the CSN complex. The BRISC complex is required for normal mitotic spindle assembly and microtubule attachment to kinetochores via its role in deubiquitinating numa1. Plays a role in interferon signaling via its role in the deubiquitination of the interferon receptor ifnar1; deubiquitination increases ifnar1 activity by enhancing its stability and cell surface expression. Acts as a regulator of the NLRP3 inflammasome by mediating deubiquitination of nlrp3. Down-regulates the response to bacterial lipopolysaccharide (LPS) via its role in ifnar1 deubiquitination. The polypeptide is Lys-63-specific deubiquitinase BRCC36 (brcc3) (Xenopus laevis (African clawed frog)).